A 374-amino-acid chain; its full sequence is Alcohol dehydrogenase class-3 (374 aa).

Position 2 is an N-acetylalanine (Ala-2). 7 residues coordinate Zn(2+): Cys-45, His-67, Cys-97, Cys-100, Cys-103, Cys-111, and Cys-174. N6-succinyllysine is present on Lys-233. Ser-247 carries the post-translational modification Phosphoserine. Lys-315 is modified (N6-succinyllysine). Residues Ser-324 and Ser-351 each carry the phosphoserine modification.

Belongs to the zinc-containing alcohol dehydrogenase family. Class-III subfamily. In terms of assembly, homodimer. It depends on Zn(2+) as a cofactor.

It localises to the cytoplasm. The catalysed reaction is a primary alcohol + NAD(+) = an aldehyde + NADH + H(+). It carries out the reaction a secondary alcohol + NAD(+) = a ketone + NADH + H(+). It catalyses the reaction S-(hydroxymethyl)glutathione + NADP(+) = S-formylglutathione + NADPH + H(+). The enzyme catalyses S-(hydroxymethyl)glutathione + NAD(+) = S-formylglutathione + NADH + H(+). The catalysed reaction is 20-oxo-(5Z,8Z,11Z,14Z)-eicosatetraenoate + NAD(+) + H2O = (5Z,8Z,11Z,14Z)-eicosatetraenedioate + NADH + 2 H(+). It carries out the reaction 20-hydroxy-(5Z,8Z,11Z,14Z)-eicosatetraenoate + NAD(+) = 20-oxo-(5Z,8Z,11Z,14Z)-eicosatetraenoate + NADH + H(+). It catalyses the reaction S-nitrosoglutathione + NADH + H(+) = S-(hydroxysulfenamide)glutathione + NAD(+). Its function is as follows. Catalyzes the oxidation of long-chain primary alcohols and the oxidation of S-(hydroxymethyl) glutathione. Also oxidizes long chain omega-hydroxy fatty acids, such as 20-HETE, producing both the intermediate aldehyde, 20-oxoarachidonate and the end product, a dicarboxylic acid, (5Z,8Z,11Z,14Z)-eicosatetraenedioate. Class-III ADH is remarkably ineffective in oxidizing ethanol. Required for clearance of cellular formaldehyde, a cytotoxic and carcinogenic metabolite that induces DNA damage. Also acts as a S-nitroso-glutathione reductase by catalyzing the NADH-dependent reduction of S-nitrosoglutathione, thereby regulating protein S-nitrosylation. The protein is Alcohol dehydrogenase class-3 of Homo sapiens (Human).